The following is a 397-amino-acid chain: Putative protein FAM47D (397 aa).

It belongs to the FAM47 family.

The sequence is that of Putative protein FAM47D (FAM47DP) from Homo sapiens (Human).